The chain runs to 300 residues: Energy-coupling factor transporter ATP-binding protein EcfA2 (300 aa).

The ABC transporter domain occupies Ile-3–Leu-258. Gly-40–Thr-47 serves as a coordination point for ATP.

It belongs to the ABC transporter superfamily. Energy-coupling factor EcfA family. In terms of assembly, forms a stable energy-coupling factor (ECF) transporter complex composed of 2 membrane-embedded substrate-binding proteins (S component), 2 ATP-binding proteins (A component) and 2 transmembrane proteins (T component).

It is found in the cell membrane. In terms of biological role, ATP-binding (A) component of a common energy-coupling factor (ECF) ABC-transporter complex. Unlike classic ABC transporters this ECF transporter provides the energy necessary to transport a number of different substrates. This chain is Energy-coupling factor transporter ATP-binding protein EcfA2, found in Mesomycoplasma hyopneumoniae (strain 232) (Mycoplasma hyopneumoniae).